Reading from the N-terminus, the 316-residue chain is Protoheme IX farnesyltransferase (316 aa).

Transmembrane regions (helical) follow at residues 32-52 (VMSLVVFTAFAGLVLAPGQIN), 53-73 (PVLGLIAILCIAVGAGASGAL), 93-113 (IPAGRIAPSEALAFGLVLSCF), 116-136 (AILGLAVNWLSAGILAFTIFF), 152-172 (NIVIGGAAGAFPPMIGWACVT), 180-200 (TVLFLIIFLWTPAHFWALALF), 226-246 (IVAYAVLTAICAVLPSYLGFA), 248-268 (FAYGLVAAALGAIFIYCSIAV), and 289-309 (IFYLFAIFSALMIDRLAAMLV).

It belongs to the UbiA prenyltransferase family. Protoheme IX farnesyltransferase subfamily.

The protein localises to the cell inner membrane. The enzyme catalyses heme b + (2E,6E)-farnesyl diphosphate + H2O = Fe(II)-heme o + diphosphate. It participates in porphyrin-containing compound metabolism; heme O biosynthesis; heme O from protoheme: step 1/1. Functionally, converts heme B (protoheme IX) to heme O by substitution of the vinyl group on carbon 2 of heme B porphyrin ring with a hydroxyethyl farnesyl side group. This chain is Protoheme IX farnesyltransferase, found in Rhizobium etli (strain CIAT 652).